Reading from the N-terminus, the 139-residue chain is Maintenance of telomere capping protein 7 (139 aa).

Helical transmembrane passes span 13-33 (SHHV…FVLL) and 42-62 (FYFL…FVFI). The segment at 94–121 (RSVANPALPPQKKKKKKKKGTLRTGEVE) is disordered. Basic residues predominate over residues 104 to 114 (QKKKKKKKKGT).

Its subcellular location is the membrane. Its function is as follows. May be involved in telomere capping. This chain is Maintenance of telomere capping protein 7 (MTC7), found in Saccharomyces cerevisiae (strain ATCC 204508 / S288c) (Baker's yeast).